Reading from the N-terminus, the 310-residue chain is Upstream stimulatory factor 1 (310 aa).

A compositionally biased stretch (polar residues) spans 1-17; that stretch reads MKGQQKTAETEEGTVQI. Disordered regions lie at residues 1 to 26 and 171 to 209; these read MKGQ…ATGE and QGGS…EVER. The segment covering 190 to 209 has biased composition (basic and acidic residues); it reads EAPRTTRDEKRRAQHNEVER. Residues 199 to 254 form the bHLH domain; it reads KRRAQHNEVERRRRDKINNWIVQLSKIIPDCSMESTKSGQSKGGILSKACDYIQEL. Positions 271-292 are leucine-zipper; sequence LQLDNDVLRQQVEDLKNKNLLL. Lys-306 participates in a covalent cross-link: Glycyl lysine isopeptide (Lys-Gly) (interchain with G-Cter in SUMO2).

In terms of assembly, efficient DNA binding requires dimerization with another bHLH protein. Binds DNA as a homodimer or a heterodimer (USF1/USF2). Interacts with varicella-zoster virus IE62 protein.

It is found in the nucleus. Transcription factor that binds to a symmetrical DNA sequence (E-boxes) (5'-CACGTG-3') that is found in a variety of viral and cellular promoters. In Homo sapiens (Human), this protein is Upstream stimulatory factor 1 (USF1).